The following is a 400-amino-acid chain: 11-beta-hydroxysteroid dehydrogenase type 2 (400 aa).

82 to 111 (TRAVLITGCDTGFGKETAKKLDAMGFTVLA) is an NAD(+) binding site. A substrate-binding site is contributed by serine 219. Residue tyrosine 232 is the Proton acceptor of the active site. Residues 378–400 (PGQPGPVHDTTQDPNPSPTVSAL) are disordered. Residues 389–400 (QDPNPSPTVSAL) show a composition bias toward polar residues.

Belongs to the short-chain dehydrogenases/reductases (SDR) family. As to quaternary structure, interacts with ligand-free cytoplasmic NR3C2. In terms of tissue distribution, highly expressed in kidney, adrenal gland and distal colon, and at much lower levels in lung, hypothalamus, hippocampus, and midbrain.

The protein resides in the microsome. Its subcellular location is the endoplasmic reticulum. It carries out the reaction an 11beta-hydroxysteroid + NAD(+) = an 11-oxosteroid + NADH + H(+). The catalysed reaction is corticosterone + NAD(+) = 11-dehydrocorticosterone + NADH + H(+). It catalyses the reaction 11beta,17beta-dihydroxyandrost-4-ene-3-one + NAD(+) = 17beta-hydroxyandrost-4-ene-3,11-dione + NADH + H(+). The enzyme catalyses 11beta-hydroxyandrost-4-ene-3,17-dione + NAD(+) = androst-4-ene-3,11,17-trione + NADH + H(+). The protein operates within steroid metabolism. Its activity is regulated as follows. Inhibited by glycyrrhetinic acid. Induced by progesterone, through the Ihh signaling pathway. Its function is as follows. Catalyzes the conversion of biologically active 11beta-hydroxyglucocorticoids (11beta-hydroxysteroid) such as corticosterone, to inactive 11-ketoglucocorticoids (11-oxosteroid) such as 11-dehydrocorticosterone, in the presence of NAD(+). Functions as a dehydrogenase (oxidase), thereby decreasing the concentration of active glucocorticoids, thus protecting the nonselective mineralocorticoid receptor from occupation by glucocorticoids. Plays an important role in maintaining glucocorticoids balance during preimplantation and protects the fetus from excessive maternal corticosterone exposure. Catalyzes the oxidation of 11beta-hydroxytestosterone (11beta,17beta-dihydroxyandrost-4-ene-3-one) to 11-ketotestosterone (17beta-hydroxyandrost-4-ene-3,11-dione), a major bioactive androgen. Catalyzes the conversion of 11beta-hydroxyandrostenedione (11beta-hydroxyandrost-4-ene-3,17-dione) to 11-ketoandrostenedione (androst-4-ene-3,11,17-trione), which can be further metabolized to 11-ketotestosterone. Converts 7-beta-25-dihydroxycholesterol to 7-oxo-25-hydroxycholesterol in vitro. 7-beta-25-dihydroxycholesterol (not 7-oxo-25-hydroxycholesterol) acts as a ligand for the G-protein-coupled receptor (GPCR) Epstein-Barr virus-induced gene 2 (EBI2) and may thereby regulate immune cell migration. This chain is 11-beta-hydroxysteroid dehydrogenase type 2 (Hsd11b2), found in Rattus norvegicus (Rat).